A 73-amino-acid chain; its full sequence is Large ribosomal subunit protein uL29 (73 aa).

It belongs to the universal ribosomal protein uL29 family.

In Aquifex aeolicus (strain VF5), this protein is Large ribosomal subunit protein uL29 (rpmC).